The chain runs to 730 residues: Cyclin-dependent kinase 12 (730 aa).

Disordered stretches follow at residues 1–230 and 246–283; these read MEIS…APFS and FSLS…IATR. Basic and acidic residues predominate over residues 9 to 21; it reads THERDRKGSYGHR. Over residues 57-67 the composition is skewed to polar residues; it reads SISPQYKQRNW. Residues 75 to 94 show a composition bias toward basic and acidic residues; that stretch reads GRDRGRNDFSYRKKGKDYNK. Composition is skewed to basic residues over residues 95–122 and 151–163; these read RRDK…KRRN and KSKK…RKHS. Residues 194-203 are compositionally biased toward low complexity; the sequence is FNINPFQPMF. Residues 204–230 show a composition bias toward pro residues; that stretch reads SQPPPPPLPPNSQFMTPPPRPPPAPFS. Residues 313–605 enclose the Protein kinase domain; it reads MLDQIGEGTY…AKEALNHPWI (293 aa). ATP is bound by residues 317-325, Lys340, and 398-403; these read IGEGTYGQV and EYVDHD. Catalysis depends on Asp444, which acts as the Proton acceptor. Residues 623-730 are disordered; the sequence is DCHEMWSKKQ…QSQYQSVFFK (108 aa). ATP is bound at residue His625. Residues 676-688 are compositionally biased toward basic residues; the sequence is NHHHHHHHSHHHA. The segment covering 714-730 has biased composition (polar residues); the sequence is NNHQPVPQSQYQSVFFK.

Belongs to the protein kinase superfamily. CMGC Ser/Thr protein kinase family. CDC2/CDKX subfamily.

It is found in the nucleus. The enzyme catalyses [DNA-directed RNA polymerase] + ATP = phospho-[DNA-directed RNA polymerase] + ADP + H(+). It catalyses the reaction L-seryl-[protein] + ATP = O-phospho-L-seryl-[protein] + ADP + H(+). It carries out the reaction L-threonyl-[protein] + ATP = O-phospho-L-threonyl-[protein] + ADP + H(+). Cyclin-dependent kinase which displays CTD kinase activity: hyperphosphorylates 'Ser-2' in the C-terminal heptapeptide repeat domain (CTD) of the largest RNA polymerase II subunit, thereby acting as a key regulator of transcription elongation. Required for normal reproduction. In Caenorhabditis elegans, this protein is Cyclin-dependent kinase 12.